The chain runs to 184 residues: MSRIGKLPVTLPEKVELSVSPSNLVTVKGPKGTLTQQVDVDIKVSVEDGKVVVARPTEQKRHKALHGLYRSLISNMVQGVSQGYKVELELVGVGYKATATNNILELSLGYSHGIFLKLPSEISASALTEKGKNPIVTLECIDKQLIGQVSAKIRSLRKIEPYKGKGVRFKGEVVRRKAGKTASK.

The protein belongs to the universal ribosomal protein uL6 family. Part of the 50S ribosomal subunit.

This protein binds to the 23S rRNA, and is important in its secondary structure. It is located near the subunit interface in the base of the L7/L12 stalk, and near the tRNA binding site of the peptidyltransferase center. The polypeptide is Large ribosomal subunit protein uL6 (Cytophaga hutchinsonii (strain ATCC 33406 / DSM 1761 / CIP 103989 / NBRC 15051 / NCIMB 9469 / D465)).